Reading from the N-terminus, the 363-residue chain is Phosphoserine aminotransferase (363 aa).

Residue Arg41 participates in L-glutamate binding. Residues 75-76 (AS), Trp100, Thr155, Asp175, and Gln198 contribute to the pyridoxal 5'-phosphate site. An N6-(pyridoxal phosphate)lysine modification is found at Lys199. 239 to 240 (NT) contacts pyridoxal 5'-phosphate.

The protein belongs to the class-V pyridoxal-phosphate-dependent aminotransferase family. SerC subfamily. In terms of assembly, homodimer. It depends on pyridoxal 5'-phosphate as a cofactor.

The protein resides in the cytoplasm. The catalysed reaction is O-phospho-L-serine + 2-oxoglutarate = 3-phosphooxypyruvate + L-glutamate. It catalyses the reaction 4-(phosphooxy)-L-threonine + 2-oxoglutarate = (R)-3-hydroxy-2-oxo-4-phosphooxybutanoate + L-glutamate. The protein operates within amino-acid biosynthesis; L-serine biosynthesis; L-serine from 3-phospho-D-glycerate: step 2/3. In terms of biological role, catalyzes the reversible conversion of 3-phosphohydroxypyruvate to phosphoserine and of 3-hydroxy-2-oxo-4-phosphonooxybutanoate to phosphohydroxythreonine. The polypeptide is Phosphoserine aminotransferase (Streptococcus agalactiae serotype III (strain NEM316)).